The sequence spans 1412 residues: Sister chromatid cohesion protein PDS5 homolog B (1412 aa).

The HEAT repeat unit spans residues 383 to 419 (LLVNDHLLNFVRERTLDKRWRVRKEAMMGLAQIYKKY). The interval 1137–1412 (PLSSAGKQSQ…RRRTSKRERR (276 aa)) is disordered. Composition is skewed to low complexity over residues 1139–1149 (SSAGKQSQSKS) and 1156–1167 (SNASSSSNPSSP). Composition is skewed to basic and acidic residues over residues 1172–1184 (GRLD…HSEN), 1196–1212 (KKTD…LEKP), 1223–1241 (SEEK…DQKL), and 1263–1272 (QEEKRLKEDV). Over residues 1322–1331 (VEEEEEEEER) the composition is skewed to acidic residues. Over residues 1350-1362 (RTQQSRAGRSKQA) the composition is skewed to polar residues. Positions 1386–1397 (VPQEEVMEEEEV) are enriched in acidic residues. The span at 1402-1412 (VRRRTSKRERR) shows a compositional bias: basic residues.

In terms of assembly, interacts with the cohesin complex.

Its subcellular location is the nucleus. Its function is as follows. Plays a role in androgen-induced proliferative arrest. Required for maintenance of sister chromatid cohesion during mitosis. This is Sister chromatid cohesion protein PDS5 homolog B (PDS5B) from Gallus gallus (Chicken).